A 426-amino-acid chain; its full sequence is MSAIVDITSREILDSRGNPTVEVEVELSSGARGRAAVPSGASTGAHEAVELRDGDKSRYGGKGVLKACSHVENDILEVLQGAESEDQIAIDNAMIDLDGTPNKSRLGANAILGVSLAVAKATAEELELPLYRYVGGAYAHLLPVPMMNIVNGGEHADNPIDIQEFMIQPVGAPTVADAIRMGSEIFARLKKGLSEAGYNTNVGDEGGFAPNLKSADEALGFIAKSVEAAGYKLGEDVTFALDCAATEFYADGRYNLKGEGKEFDASGMISYLEDLANRYPIVSIEDGLAEDDWEGWAELTTRLGKKLQLVGDDLFVTNPERLRRGIKAGTGNALLVKVNQIGTLTETLEAVETAHKAGYACVMSHRSGETEDSVIADLAVATNCGQIKTGSLSRSDRTAKYNQLIRIEQQLGSAARYAGRSILKNS.

Q163 is a (2R)-2-phosphoglycerate binding site. E205 acts as the Proton donor in catalysis. Mg(2+) is bound by residues D242, E285, and D312. Positions 337, 366, 367, and 388 each coordinate (2R)-2-phosphoglycerate. K337 functions as the Proton acceptor in the catalytic mechanism.

The protein belongs to the enolase family. It depends on Mg(2+) as a cofactor.

The protein localises to the cytoplasm. It localises to the secreted. It is found in the cell surface. It carries out the reaction (2R)-2-phosphoglycerate = phosphoenolpyruvate + H2O. It functions in the pathway carbohydrate degradation; glycolysis; pyruvate from D-glyceraldehyde 3-phosphate: step 4/5. Functionally, catalyzes the reversible conversion of 2-phosphoglycerate (2-PG) into phosphoenolpyruvate (PEP). It is essential for the degradation of carbohydrates via glycolysis. The sequence is that of Enolase from Gluconobacter oxydans (strain 621H) (Gluconobacter suboxydans).